We begin with the raw amino-acid sequence, 97 residues long: YcgL domain-containing protein Pmen_1774 (97 aa).

Positions 3-87 (RICSIYKSPR…PEEDYIQHLP (85 aa)) constitute a YcgL domain.

This is YcgL domain-containing protein Pmen_1774 from Ectopseudomonas mendocina (strain ymp) (Pseudomonas mendocina).